A 164-amino-acid polypeptide reads, in one-letter code: Cell cycle link protein (164 aa).

Residues 9–22 (LPEELKEKIMNEHL) are binding to host SKP1 protein. An LXCXE motif, interaction with host RBR motif is present at residues 111-115 (LYCSE).

It belongs to the nanovirus Clink protein family. As to quaternary structure, interacts with host SKP1. Interacts (via LXCXE domain) with host retinoblastoma-related protein 1 (RBR1). Interacts (via LXCXE domain) with retinoblastoma-related proteins (RBR).

Interacts with and disrupts the function of host retinoblastoma-related proteins RBR, which are key regulators of the cell cycle. Induces transcriptional activation of E2F-regulated S-phase and G2/M-phase-specific genes. Inactivation of the ability of RBR to arrest the cell cycle leads to the stimulation of viral DNA replication. The protein is Cell cycle link protein (DNA-C) of Trifolium subterraneum (Subterranean clover).